We begin with the raw amino-acid sequence, 272 residues long: Hemin import ATP-binding protein HmuV (272 aa).

In terms of domain architecture, ABC transporter spans 2–255 (LNADHLHVAR…EPIARCYGFR (254 aa)). 34-41 (GRNGAGKS) provides a ligand contact to ATP.

It belongs to the ABC transporter superfamily. Heme (hemin) importer (TC 3.A.1.14.5) family. In terms of assembly, the complex is composed of two ATP-binding proteins (HmuV), two transmembrane proteins (HmuU) and a solute-binding protein (HmuT).

The protein localises to the cell inner membrane. Functionally, part of the ABC transporter complex HmuTUV involved in hemin import. Responsible for energy coupling to the transport system. This is Hemin import ATP-binding protein HmuV from Burkholderia pseudomallei (strain 1710b).